The sequence spans 536 residues: Pre-mRNA 3'-end-processing factor FIP1 (536 aa).

Composition is skewed to basic and acidic residues over residues 1 to 10 and 32 to 42; these read MSAGEVERLV and VHVHSDLAKDL. 3 disordered regions span residues 1–95, 212–246, and 300–536; these read MSAG…EDDV, VQQG…GLPP, and FPPG…APAE. Residues 1-110 are sufficient for interaction with PAPOLA; that stretch reads MSAGEVERLV…DIKTGAPQYG (110 aa). A necessary for stimulating PAPOLA activity region spans residues 1 to 296; the sequence is MSAGEVERLV…TEVDNNFSKP (296 aa). 2 stretches are compositionally biased toward acidic residues: residues 43–54 and 80–94; these read DENEVERPEEEN and TEDD…DEDD. Residues Ser84, Ser86, and Ser88 each carry the phosphoserine modification. Residues 136 to 219 are sufficient for interaction with CPSF4; it reads KGVDLDAPGS…ITVQQGRTGN (84 aa). Pro residues predominate over residues 300-344; sequence FPPGAPPTHLPPPPFLPPPPTVSTAPPLIPPPGFPPPPGAPPPSL. Tyr366 is modified (phosphotyrosine). Polar residues predominate over residues 374-390; the sequence is LTSSAPSWPSLVDTTKQ. The interval 383–536 is sufficient for interaction with CPSF1 and CSTF3; the sequence is SLVDTTKQWD…QESTEAAPAE (154 aa). Basic and acidic residues predominate over residues 394–434; it reads YARREKDRDRDRERDRDRERERDRDRERERTRERERERDHS. Residues 397-432 are arg/Asp/Glu-rich domain; it reads REKDRDRDRERDRDRERERDRDRERERTRERERERD. Phosphoserine is present on Ser434. Residue Thr436 is modified to Phosphothreonine. Residues Ser438 and Ser442 each carry the phosphoserine modification. The span at 443 to 470 shows a compositional bias: basic and acidic residues; the sequence is DEERYRYREYAERGYERHRASREKEERH. Over residues 484-493 the composition is skewed to basic residues; it reads KSSRSNSRRR. A Phosphoserine modification is found at Ser496. Positions 502-512 are enriched in basic residues; the sequence is HRRHKHKKSKR.

This sequence belongs to the FIP1 family. Component of the cleavage and polyadenylation specificity factor (CPSF) complex, composed of CPSF1, CPSF2, CPSF3, CPSF4 and FIP1L1. Found in a complex with CPSF1, FIP1L1 and PAPOLA. Interacts with CPSF1, CPSF4, CSTF2 and CSTF3. Interacts with AHCYL1 (when phosphorylated); the interaction is direct and associates AHCYL1 with the CPSF complex and RNA. Interacts with PAPOLA; the interaction seems to be increased by the interaction with AHCYL1. Interacts with NUDT21/CPSF5; this interaction occurs in a RNA sequence-specific manner. Interacts (preferentially via unphosphorylated form and Arg/Glu/Asp-rich domain) with CPSF6 (via Arg/Ser-rich domain); this interaction mediates, at least in part, the interaction between the CFIm and CPSF complexes and may be inhibited by CPSF6 hyper-phosphorylation. Interacts (preferentially via unphosphorylated form and Arg/Asp/Glu-rich domain) with CPSF7 (via Arg/Ser-rich domain); this interaction mediates, at least in part, the interaction between the CFIm and CPSF complexes and may be inhibited by CPSF7 hyper-phosphorylation.

It localises to the nucleus. In terms of biological role, component of the cleavage and polyadenylation specificity factor (CPSF) complex that plays a key role in pre-mRNA 3'-end formation, recognizing the AAUAAA signal sequence and interacting with poly(A) polymerase and other factors to bring about cleavage and poly(A) addition. FIP1L1 contributes to poly(A) site recognition and stimulates poly(A) addition. Binds to U-rich RNA sequence elements surrounding the poly(A) site. May act to tether poly(A) polymerase to the CPSF complex. The chain is Pre-mRNA 3'-end-processing factor FIP1 (Fip1l1) from Rattus norvegicus (Rat).